Here is a 288-residue protein sequence, read N- to C-terminus: MSQISAKDVKDLRDTTGVGMMDCKKALEETGGDMQKAVEYLRKKGAALAAKRAEKDASEGMICIKVAEDRKAGVILELNCETDFVARGEVFTGFAGALGQLALEGSAASAGALLGMTLSAEFGGEKVEDAIKTMTGKLGEKIELKRLVFCDAADGLVEAYVHPGAQLGAIIHIASAQPDSARELARDLAMQVAAAAPIVVDRSAVPEELIAKESDIYRQQALGQGKKEEFVDRIVQGRIEKYYQEVVLTEQAFIKVNNMKVSDVLGEFRKQHEAAVEIREFVRYQLGE.

An involved in Mg(2+) ion dislocation from EF-Tu region spans residues 82-85 (TDFV).

The protein belongs to the EF-Ts family.

It localises to the cytoplasm. Functionally, associates with the EF-Tu.GDP complex and induces the exchange of GDP to GTP. It remains bound to the aminoacyl-tRNA.EF-Tu.GTP complex up to the GTP hydrolysis stage on the ribosome. This is Elongation factor Ts from Chlorobium phaeovibrioides (strain DSM 265 / 1930) (Prosthecochloris vibrioformis (strain DSM 265)).